The sequence spans 801 residues: Phosphatidylinositol 3-kinase pik3 (801 aa).

Residues 14–166 (VTARFLVKFC…RLDGLLLKLQ (153 aa)) form the C2 PI3K-type domain. The region spanning 257-439 (DKDLKPNSKI…SSVMFLFQKE (183 aa)) is the PIK helical domain. The PI3K/PI4K catalytic domain occupies 515–785 (IPDACTVFKS…LINDSVSALF (271 aa)). The interval 521–527 (VFKSTMQ) is G-loop. The tract at residues 654-662 (GVGDRHLDN) is catalytic loop. The activation loop stretch occupies residues 673–694 (HADFGYILGRDPKLFSPAMKLS).

It belongs to the PI3/PI4-kinase family. Component of the autophagy-specific vps34 PI3-kinase complex I composed of vps15, atg6, pik3/vps34, atg14 and atg38. Also a component of the VPS34 PI3-kinase complex II composed of atg6, pik3, vps15 and vps38.

The enzyme catalyses a 1,2-diacyl-sn-glycero-3-phospho-(1D-myo-inositol) + ATP = a 1,2-diacyl-sn-glycero-3-phospho-(1D-myo-inositol-3-phosphate) + ADP + H(+). Phosphatidylinositol 3-kinase that functions as a part of the autophagy-specific VPS34 PI3-kinase complex I that plays a role in autophagosome assembly. This complex is essential to recruit the atg8-phosphatidylinositol conjugate and the atg12-atg5 conjugate to the pre-autophagosomal structure. Also functions as part of the VPS34 PI3-kinase complex II. This is Phosphatidylinositol 3-kinase pik3 (pik3) from Schizosaccharomyces pombe (strain 972 / ATCC 24843) (Fission yeast).